A 300-amino-acid polypeptide reads, in one-letter code: Ribonuclease Z (300 aa).

His63, His65, Asp67, His68, His140, Asp207, and His265 together coordinate Zn(2+). Asp67 functions as the Proton acceptor in the catalytic mechanism.

This sequence belongs to the RNase Z family. Homodimer. The cofactor is Zn(2+).

It carries out the reaction Endonucleolytic cleavage of RNA, removing extra 3' nucleotides from tRNA precursor, generating 3' termini of tRNAs. A 3'-hydroxy group is left at the tRNA terminus and a 5'-phosphoryl group is left at the trailer molecule.. In terms of biological role, zinc phosphodiesterase, which displays some tRNA 3'-processing endonuclease activity. Probably involved in tRNA maturation, by removing a 3'-trailer from precursor tRNA. The sequence is that of Ribonuclease Z from Ignicoccus hospitalis (strain KIN4/I / DSM 18386 / JCM 14125).